The following is a 91-amino-acid chain: Small ribosomal subunit protein uS19 (91 aa).

It belongs to the universal ribosomal protein uS19 family.

Protein S19 forms a complex with S13 that binds strongly to the 16S ribosomal RNA. This is Small ribosomal subunit protein uS19 from Marinomonas sp. (strain MWYL1).